A 53-amino-acid chain; its full sequence is Large ribosomal subunit protein eL24 (53 aa).

Cys4, Cys7, Cys30, and Cys34 together coordinate Zn(2+). Residues Cys4–Cys34 form a C4-type zinc finger.

The protein belongs to the eukaryotic ribosomal protein eL24 family. In terms of assembly, part of the 50S ribosomal subunit. Forms a cluster with proteins L3 and L14. The cofactor is Zn(2+).

Its function is as follows. Binds to the 23S rRNA. The polypeptide is Large ribosomal subunit protein eL24 (Methanothermobacter thermautotrophicus (strain ATCC 29096 / DSM 1053 / JCM 10044 / NBRC 100330 / Delta H) (Methanobacterium thermoautotrophicum)).